A 265-amino-acid chain; its full sequence is Homeobox protein CDX-1 (265 aa).

A disordered region spans residues 9 to 152 (KDSPVYPGPA…GGGGVSGKTR (144 aa)). The segment covering 30 to 43 (YGPPAPPPAPPQYP) has biased composition (pro residues). A compositionally biased stretch (low complexity) spans 73 to 92 (AAAYGPGPAAPAASPASLAF). Over residues 93-108 (GPPPDFSPVPAPPGPG) the composition is skewed to pro residues. Low complexity predominate over residues 110–126 (GLLAQPLGGPGTPSSPG). A DNA-binding region (homeobox) is located at residues 154–213 (KDKYRVVYTDHQRLELEKEFHYSRYITIRRKSELAANLGLTERQVKIWFQNRRAKERKVN). Residues 157–178 (YRVVYTDHQRLELEKEFHYSRY) form an interaction with DNA region. The interval 196-207 (RQVKIWFQNRRA) is interaction with 5-mCpG DNA. Residues 206-217 (RAKERKVNKKKQ) are compositionally biased toward basic residues. Residues 206–265 (RAKERKVNKKKQQQQQPPQPPTAHDITATPARPSLGGLCPSNTSLLATSSPMPVKEEFLP) form a disordered region. Over residues 245 to 256 (PSNTSLLATSSP) the composition is skewed to polar residues.

It belongs to the Caudal homeobox family.

The protein localises to the nucleus. Plays a role in transcriptional regulation. Involved in activated KRAS-mediated transcriptional activation of PRKD1 in colorectal cancer (CRC) cells. Binds to the PRKD1 promoter in colorectal cancer (CRC) cells. Could play a role in the terminal differentiation of the intestine. Binds preferentially to methylated DNA. The polypeptide is Homeobox protein CDX-1 (CDX1) (Pongo pygmaeus (Bornean orangutan)).